Consider the following 335-residue polypeptide: N-acetyl-gamma-glutamyl-phosphate reductase (335 aa).

Residue Cys147 is part of the active site.

This sequence belongs to the NAGSA dehydrogenase family. Type 1 subfamily.

Its subcellular location is the cytoplasm. It catalyses the reaction N-acetyl-L-glutamate 5-semialdehyde + phosphate + NADP(+) = N-acetyl-L-glutamyl 5-phosphate + NADPH + H(+). The protein operates within amino-acid biosynthesis; L-arginine biosynthesis; N(2)-acetyl-L-ornithine from L-glutamate: step 3/4. Catalyzes the NADPH-dependent reduction of N-acetyl-5-glutamyl phosphate to yield N-acetyl-L-glutamate 5-semialdehyde. The polypeptide is N-acetyl-gamma-glutamyl-phosphate reductase (Sulfurovum sp. (strain NBC37-1)).